Reading from the N-terminus, the 315-residue chain is Ribosomal RNA small subunit methyltransferase H (315 aa).

S-adenosyl-L-methionine contacts are provided by residues 37 to 39, Asp57, Phe83, Asp105, and Gln112; that span reads GGH.

This sequence belongs to the methyltransferase superfamily. RsmH family.

The protein localises to the cytoplasm. The catalysed reaction is cytidine(1402) in 16S rRNA + S-adenosyl-L-methionine = N(4)-methylcytidine(1402) in 16S rRNA + S-adenosyl-L-homocysteine + H(+). Functionally, specifically methylates the N4 position of cytidine in position 1402 (C1402) of 16S rRNA. In Pseudomonas fluorescens (strain SBW25), this protein is Ribosomal RNA small subunit methyltransferase H.